Here is a 258-residue protein sequence, read N- to C-terminus: 1-(5-phosphoribosyl)-5-[(5-phosphoribosylamino)methylideneamino] imidazole-4-carboxamide isomerase 2 (258 aa).

D14 serves as the catalytic Proton acceptor. D140 functions as the Proton donor in the catalytic mechanism.

The protein belongs to the HisA/HisF family.

The protein localises to the cytoplasm. The catalysed reaction is 1-(5-phospho-beta-D-ribosyl)-5-[(5-phospho-beta-D-ribosylamino)methylideneamino]imidazole-4-carboxamide = 5-[(5-phospho-1-deoxy-D-ribulos-1-ylimino)methylamino]-1-(5-phospho-beta-D-ribosyl)imidazole-4-carboxamide. The protein operates within amino-acid biosynthesis; L-histidine biosynthesis; L-histidine from 5-phospho-alpha-D-ribose 1-diphosphate: step 4/9. The chain is 1-(5-phosphoribosyl)-5-[(5-phosphoribosylamino)methylideneamino] imidazole-4-carboxamide isomerase 2 (hisA2) from Photorhabdus laumondii subsp. laumondii (strain DSM 15139 / CIP 105565 / TT01) (Photorhabdus luminescens subsp. laumondii).